Reading from the N-terminus, the 588-residue chain is Serine/threonine-protein phosphatase 2A 65 kDa regulatory subunit A alpha isoform (588 aa).

HEAT repeat units follow at residues 2–42 (AMVD…ALGE), 44–80 (RTRKELIPFLSENSDDDDEVLLAMAEELGVFIPFVGG), 81–119 (IEFAHVLLPPLESLCTVEETCVREKAVESLCKIGSQMKE), 158–196 (DVLKTELRATYSQLCKDDMPMVRRAAASNLGKFATTVES), 197–235 (TFLIAEIMTMFDDLTKDDQDSVRLLAVEGCAALGKLLEP), 236–274 (QDCVARILPVIVNFSQDKSWRVRYMVANQLYELCEAVGP), 275–313 (DCTRTDLVPAYVRLLRDNEAEVRIAAAGKVTKFCRLLNP), 315–352 (LAIQHILPCVKELSSDSSQHVRSALASVIMGMAPILGK), 353–391 (DSTIEHLLPIFLSLLKDEFPDVRLNIISKLDQVNQVIGI), 393–430 (LLSQSLLPAIVELAEDRHWRVRLAIIEYVPLLASQLGI), 432–469 (FFDDKLGALCMQWLQDKVYSIREAAANNLKRLAEEFGP), 470–508 (EWAMQHLVPQVLDMVNNPHYLHRMMVLRAISLMAPVMGS), 509–547 (EITCSKFLPVVVEASKDRVPNIKFNVAKLLQSLIPIVDQ), and 549–586 (VVDKTIRQCLVDLSEDPDVDVRYFANQALNSIDGSTAA).

Belongs to the phosphatase 2A regulatory subunit A family. PP2A consists of a common heterodimeric core enzyme, composed of a 36 kDa catalytic subunit (subunit C) and a 65 kDa constant regulatory subunit (subunit A), that associates with a variety of regulatory subunits such as subunits B (the R2/B/PR55/B55, R3/B''/PR72/PR130/PR59 and R5/B'/B56 families) and the regulatory subunits TON2. Interacts with CYP20-1/ROC7. Also interacts with phosphatidic acid (PA), a lipid signaling molecule. Interacts with CHIP. Interacts with SIC/RON3. Post-translationally, ubiquitinated. CHIP-mediated ubiquitination enhances phosphatase activity after an abiotic stress such as low temperature or darkness. In terms of tissue distribution, mostly expressed in cell-dividing tissues such as apical meristems. Ubiquitous, with higher levels in roots and flowers (at protein level).

The protein resides in the cytoplasm. The protein localises to the cytosol. Its subcellular location is the nucleus. Its function is as follows. The A subunit of protein phosphatase 2A serves as a scaffolding molecule to coordinate the assembly of the catalytic subunit and a variable regulatory B subunit. Seems to act as a positive regulator of PP2A catalytic activity. Confers resistance to phosphatase inhibitors such as okadaic acid and cantharidin. Involved during developmental process such as seedling and floral developments, root gravitropism, and stomatal opening regulation. Involved in the regulation of auxin efflux, especially during basipetal (tips to base) auxin transport in roots, and appears to contribute to the perception of auxin efflux inhibitors such as 1-N-naphthylphthalamic acid (NPA) and to semicarbazone I (substituted phenylsemicarbazone of 2-acetylarylcarboxylic acids) (SCB-I). Modulates the magnitude of ethylene response in the hypocotyl and stem, and functions as a general positive transducer of early ABA signaling. The holoenzyme composed of PP2AA1, PP2A4 and B'ZETA or B'ETA acts as a negative regulator of plant innate immunity by controlling BAK1 phosphorylation state and activation in surface-localized immune receptor complexes. In Arabidopsis thaliana (Mouse-ear cress), this protein is Serine/threonine-protein phosphatase 2A 65 kDa regulatory subunit A alpha isoform (PP2AA1).